Reading from the N-terminus, the 162-residue chain is Xanthine-guanine phosphoribosyltransferase (162 aa).

Residues R43–G44 and D94–T102 contribute to the 5-phospho-alpha-D-ribose 1-diphosphate site. D95 contacts Mg(2+). The guanine site is built by D98 and I141. D98 and I141 together coordinate xanthine. Residues D98–T102 and W140–I141 contribute to the GMP site.

The protein belongs to the purine/pyrimidine phosphoribosyltransferase family. XGPT subfamily. Homotetramer. Mg(2+) serves as cofactor.

The protein localises to the cell inner membrane. The catalysed reaction is GMP + diphosphate = guanine + 5-phospho-alpha-D-ribose 1-diphosphate. The enzyme catalyses XMP + diphosphate = xanthine + 5-phospho-alpha-D-ribose 1-diphosphate. It catalyses the reaction IMP + diphosphate = hypoxanthine + 5-phospho-alpha-D-ribose 1-diphosphate. The protein operates within purine metabolism; GMP biosynthesis via salvage pathway; GMP from guanine: step 1/1. Its pathway is purine metabolism; XMP biosynthesis via salvage pathway; XMP from xanthine: step 1/1. In terms of biological role, purine salvage pathway enzyme that catalyzes the transfer of the ribosyl-5-phosphate group from 5-phospho-alpha-D-ribose 1-diphosphate (PRPP) to the N9 position of the 6-oxopurines guanine and xanthine to form the corresponding ribonucleotides GMP (guanosine 5'-monophosphate) and XMP (xanthosine 5'-monophosphate), with the release of PPi. To a lesser extent, also acts on hypoxanthine. The protein is Xanthine-guanine phosphoribosyltransferase of Oleidesulfovibrio alaskensis (strain ATCC BAA-1058 / DSM 17464 / G20) (Desulfovibrio alaskensis).